Reading from the N-terminus, the 707-residue chain is Zinc finger protein 60 (707 aa).

Residues 14 to 86 form the KRAB domain; the sequence is VTFRDVAVDF…VKKETGRPSQ (73 aa). 19 C2H2-type zinc fingers span residues 173 to 195, 201 to 223, 229 to 251, 257 to 282, 288 to 310, 316 to 338, 344 to 366, 372 to 394, 400 to 422, 428 to 450, 456 to 478, 484 to 506, 512 to 534, 540 to 562, 568 to 590, 596 to 618, 624 to 646, 652 to 674, and 680 to 702; these read YKCKDCGKCFGCKSNLHQHESIH, YECKDCGKTFRLPQMLSRHQKSH, FECNICGKSFHLPTLLQYHKNIH, FECEECGKSFKSFNRISTLFQHRTIH, YKCNVCGKAFNRRSNLLQHQKIH, FHCKVCGKAFTVLAQLTRHENIH, FECKQCGKIFSNGSYLLRHYDTH, FECNICGKAFRLHLYLSEHQKTH, FKCKLCESAFRRKYQLSEHQRIH, YQCKDCWEFFRRRSNFIEHQSIH, FECKDCGKVFRLNIHLIRHQRFH, FECKECGKAFHFSSQLNNHKTSH, FECKECGKSFKRVSSLVEHRIIH, YKCNACGRAFNRRSNLMQHEKIH, FECKDCGKAFTVLAQLTRHQTIH, YECEQCGSAFRLPYQLTQHQRIH, FQCKECGRAFVRSTGLRIHERIH, FQCKECGEAFQYHYQFLGHFRIH, and YECSECGKYFTYGRDLKVHQSIH.

This sequence belongs to the krueppel C2H2-type zinc-finger protein family. As to expression, expressed widely and evenly in most adult mouse tissues.

Its subcellular location is the nucleus. Functionally, may have a role during differentiation processes. In Mus musculus (Mouse), this protein is Zinc finger protein 60 (Zfp60).